The sequence spans 121 residues: Protein GAT4 (121 aa).

Residues 29 to 48 form a disordered region; the sequence is EAQHGLPRNADSQPARPRTG. A GATA-type zinc finger spans residues 53-79; the sequence is CGQCGEIKTSLQWREGPNGAACLCNAC.

This is Protein GAT4 (GAT4) from Saccharomyces cerevisiae (strain ATCC 204508 / S288c) (Baker's yeast).